The primary structure comprises 419 residues: Queuine tRNA-ribosyltransferase accessory subunit 2 (419 aa).

Positions 326, 328, 331, and 357 each coordinate Zn(2+).

Belongs to the queuine tRNA-ribosyltransferase family. QTRT2 subfamily. Heterodimer of a catalytic subunit and an accessory subunit. Zn(2+) is required as a cofactor.

It localises to the cytoplasm. Functionally, non-catalytic subunit of the queuine tRNA-ribosyltransferase (TGT) that catalyzes the base-exchange of a guanine (G) residue with queuine (Q) at position 34 (anticodon wobble position) in tRNAs with GU(N) anticodons (tRNA-Asp, -Asn, -His and -Tyr), resulting in the hypermodified nucleoside queuosine (7-(((4,5-cis-dihydroxy-2-cyclopenten-1-yl)amino)methyl)-7-deazaguanosine). This Drosophila grimshawi (Hawaiian fruit fly) protein is Queuine tRNA-ribosyltransferase accessory subunit 2.